Consider the following 76-residue polypeptide: Conotoxin ArMLCL-022 (76 aa).

Positions 1–19 (MLCLPVFIILLLLASTAAS) are cleaved as a signal peptide. Residues 20-52 (NPLETRIQSDLIRAALEDADMKTERGFLGVLMK) constitute a propeptide that is removed on maturation.

The protein belongs to the conotoxin T superfamily. Expressed by the venom duct.

Its subcellular location is the secreted. The sequence is that of Conotoxin ArMLCL-022 from Conus arenatus (Sand-dusted cone).